We begin with the raw amino-acid sequence, 303 residues long: Coenzyme PQQ synthesis protein B (303 aa).

Belongs to the PqqB family.

It functions in the pathway cofactor biosynthesis; pyrroloquinoline quinone biosynthesis. In terms of biological role, may be involved in the transport of PQQ or its precursor to the periplasm. This is Coenzyme PQQ synthesis protein B from Pseudomonas fluorescens (strain Pf0-1).